The sequence spans 313 residues: MSLPKLHVAVLMGGWSSERPVSLMSGEGVAKALESKGHQVTRIDMDRDVALRLAEAKPDVVFNALHGTPGEDGSIQGLMDIMGLTYTHSGLVTSVIAIDKELTKQALVPHGIPMPGGRMVKTADLYKADPLPRPYVLKPVNEGSSVGVAIVTAEGNYGSPISAASKGPWQEFDQLLAEPFIRGRELTTAVIGDRALLVTELRPKSGFYDFDAKYTEGMTDHICPAEIPDEITEACKDIALRAHRLLGCKGTSRSDFRWDDEQGVEGLFLLEVNTQPGMTPLSLVPEQARALGMDYSDLVEAIIAEALKDAGKA.

The 201-residue stretch at 104-304 (KQALVPHGIP…YSDLVEAIIA (201 aa)) folds into the ATP-grasp domain. 130-187 (PLPRPYVLKPVNEGSSVGVAIVTAEGNYGSPISAASKGPWQEFDQLLAEPFIRGRELT) provides a ligand contact to ATP. Positions 255, 271, and 273 each coordinate Mg(2+).

This sequence belongs to the D-alanine--D-alanine ligase family. It depends on Mg(2+) as a cofactor. The cofactor is Mn(2+).

It is found in the cytoplasm. It catalyses the reaction 2 D-alanine + ATP = D-alanyl-D-alanine + ADP + phosphate + H(+). It participates in cell wall biogenesis; peptidoglycan biosynthesis. In terms of biological role, cell wall formation. The chain is D-alanine--D-alanine ligase from Novosphingobium aromaticivorans (strain ATCC 700278 / DSM 12444 / CCUG 56034 / CIP 105152 / NBRC 16084 / F199).